The primary structure comprises 812 residues: Lon protease (812 aa).

Residues 12–205 enclose the Lon N-terminal domain; sequence LPMLPLRGVL…YLCELLAKEM (194 aa). 357-364 lines the ATP pocket; the sequence is GPPGVGKT. In terms of domain architecture, Lon proteolytic spans 593 to 774; it reads ENQVGVATGL…DEVLEETLLK (182 aa). Residues Ser-680 and Lys-723 contribute to the active site.

Belongs to the peptidase S16 family. As to quaternary structure, homohexamer. Organized in a ring with a central cavity.

Its subcellular location is the cytoplasm. It catalyses the reaction Hydrolysis of proteins in presence of ATP.. ATP-dependent serine protease that mediates the selective degradation of mutant and abnormal proteins as well as certain short-lived regulatory proteins. Required for cellular homeostasis and for survival from DNA damage and developmental changes induced by stress. Degrades polypeptides processively to yield small peptide fragments that are 5 to 10 amino acids long. Binds to DNA in a double-stranded, site-specific manner. The protein is Lon protease of Syntrophomonas wolfei subsp. wolfei (strain DSM 2245B / Goettingen).